The chain runs to 420 residues: Putative phosphate permease HI_1604 (420 aa).

12 helical membrane-spanning segments follow: residues 8–28, 49–69, 88–108, 112–132, 145–165, 185–205, 216–236, 250–270, 300–320, 343–363, 370–390, and 393–413; these read GSWL…GIGA, AIII…GEVT, ILAL…FIAT, WPVS…CITI, IVGS…AIFA, GPYY…KKGL, ETLI…HFYF, FGAV…AMAF, GGAL…VGLI, FAAQ…GLPI, VGAI…LTVI, and IISS…IIFY.

The protein belongs to the inorganic phosphate transporter (PiT) (TC 2.A.20) family.

The protein localises to the cell inner membrane. Its function is as follows. Potential transporter for phosphate. The sequence is that of Putative phosphate permease HI_1604 from Haemophilus influenzae (strain ATCC 51907 / DSM 11121 / KW20 / Rd).